We begin with the raw amino-acid sequence, 37 residues long: Large ribosomal subunit protein bL36c (37 aa).

Belongs to the bacterial ribosomal protein bL36 family.

The protein localises to the plastid. Its subcellular location is the chloroplast. This is Large ribosomal subunit protein bL36c from Ostreococcus tauri.